A 583-amino-acid polypeptide reads, in one-letter code: Fumarate reductase flavoprotein subunit (583 aa).

FAD-binding positions include 11 to 15, 35 to 37, 43 to 51, 155 to 157, and Asp-211; these read GGGGA, VSK, SHTVSAEGG, and WFA. His-44 carries the post-translational modification Tele-8alpha-FAD histidine. Residues His-232 and Arg-248 contribute to the active site. FAD is bound by residues 353 to 354, Glu-377, and 388 to 394; these read HY and RLGSNSL.

Belongs to the FAD-dependent oxidoreductase 2 family. FRD/SDH subfamily. As to quaternary structure, part of an enzyme complex containing four subunits: a flavoprotein (FrdA), an iron-sulfur protein (FrdB), and two hydrophobic anchor proteins (FrdC and FrdD). Requires FAD as cofactor.

It localises to the cell membrane. The enzyme catalyses a quinone + succinate = fumarate + a quinol. It catalyses the reaction a menaquinone + succinate = a menaquinol + fumarate. The protein is Fumarate reductase flavoprotein subunit (frdA) of Mycobacterium tuberculosis (strain CDC 1551 / Oshkosh).